A 139-amino-acid polypeptide reads, in one-letter code: Putative pre-16S rRNA nuclease (139 aa).

Belongs to the YqgF nuclease family.

The protein localises to the cytoplasm. Could be a nuclease involved in processing of the 5'-end of pre-16S rRNA. In Streptococcus uberis (strain ATCC BAA-854 / 0140J), this protein is Putative pre-16S rRNA nuclease.